The sequence spans 167 residues: uncharacterized protein (167 aa).

Residues 39-59 form a helical membrane-spanning segment; it reads LSLFSLSPLFLLLSISSLIFS. Positions 92-122 form a coiled coil; it reads LGTQIEMITQAMTTLESRVTDLQQESNDHRT. The tract at residues 134–167 is disordered; sequence RDLGDENRPKPTTNKMIATGEQHKGEVSTSLFHD. Basic and acidic residues predominate over residues 154–167; the sequence is EQHKGEVSTSLFHD.

It localises to the mitochondrion membrane. This is an uncharacterized protein from Arabidopsis thaliana (Mouse-ear cress).